A 53-amino-acid polypeptide reads, in one-letter code: ATP synthase F(0) complex subunit 8 (53 aa).

Residues 8-24 (PWLTTFLIVWISLIVIL) form a helical membrane-spanning segment.

It belongs to the ATPase protein 8 family. Component of the ATP synthase complex composed at least of ATP5F1A/subunit alpha, ATP5F1B/subunit beta, ATP5MC1/subunit c (homooctomer), MT-ATP6/subunit a, MT-ATP8/subunit 8, ATP5ME/subunit e, ATP5MF/subunit f, ATP5MG/subunit g, ATP5MK/subunit k, ATP5MJ/subunit j, ATP5F1C/subunit gamma, ATP5F1D/subunit delta, ATP5F1E/subunit epsilon, ATP5PF/subunit F6, ATP5PB/subunit b, ATP5PD/subunit d, ATP5PO/subunit OSCP. ATP synthase complex consists of a soluble F(1) head domain (subunits alpha(3) and beta(3)) - the catalytic core - and a membrane F(0) domain - the membrane proton channel (subunits c, a, 8, e, f, g, k and j). These two domains are linked by a central stalk (subunits gamma, delta, and epsilon) rotating inside the F1 region and a stationary peripheral stalk (subunits F6, b, d, and OSCP).

The protein localises to the mitochondrion membrane. Subunit 8, of the mitochondrial membrane ATP synthase complex (F(1)F(0) ATP synthase or Complex V) that produces ATP from ADP in the presence of a proton gradient across the membrane which is generated by electron transport complexes of the respiratory chain. ATP synthase complex consist of a soluble F(1) head domain - the catalytic core - and a membrane F(1) domain - the membrane proton channel. These two domains are linked by a central stalk rotating inside the F(1) region and a stationary peripheral stalk. During catalysis, ATP synthesis in the catalytic domain of F(1) is coupled via a rotary mechanism of the central stalk subunits to proton translocation. In vivo, can only synthesize ATP although its ATP hydrolase activity can be activated artificially in vitro. Part of the complex F(0) domain. In Alligator mississippiensis (American alligator), this protein is ATP synthase F(0) complex subunit 8.